The following is a 399-amino-acid chain: 1-deoxy-D-xylulose 5-phosphate reductoisomerase (399 aa).

Residues Thr13, Gly14, Ser15, Ile16, and Asn127 each coordinate NADPH. Residue Lys128 participates in 1-deoxy-D-xylulose 5-phosphate binding. Glu129 contributes to the NADPH binding site. Asp153 lines the Mn(2+) pocket. Ser154, Glu155, Ser187, and His210 together coordinate 1-deoxy-D-xylulose 5-phosphate. Glu155 provides a ligand contact to Mn(2+). Gly216 provides a ligand contact to NADPH. 1-deoxy-D-xylulose 5-phosphate-binding residues include Ser223, Asn228, Lys229, and Glu232. Glu232 is a Mn(2+) binding site.

It belongs to the DXR family. The cofactor is Mg(2+). Mn(2+) serves as cofactor.

It carries out the reaction 2-C-methyl-D-erythritol 4-phosphate + NADP(+) = 1-deoxy-D-xylulose 5-phosphate + NADPH + H(+). Its pathway is isoprenoid biosynthesis; isopentenyl diphosphate biosynthesis via DXP pathway; isopentenyl diphosphate from 1-deoxy-D-xylulose 5-phosphate: step 1/6. Its function is as follows. Catalyzes the NADPH-dependent rearrangement and reduction of 1-deoxy-D-xylulose-5-phosphate (DXP) to 2-C-methyl-D-erythritol 4-phosphate (MEP). The polypeptide is 1-deoxy-D-xylulose 5-phosphate reductoisomerase (Bordetella parapertussis (strain 12822 / ATCC BAA-587 / NCTC 13253)).